The sequence spans 516 residues: uncharacterized protein (516 aa).

To H.influenzae HI_0521.

This is an uncharacterized protein from Escherichia coli (strain K12).